The primary structure comprises 412 residues: Argininosuccinate synthase (412 aa).

Residues 10 to 18 (AYSGGLDTS) and Ala36 contribute to the ATP site. Tyr87 and Ser92 together coordinate L-citrulline. A Phosphotyrosine modification is found at Tyr87. Lys112 carries the post-translational modification N6-acetyllysine. Position 113 is a phosphotyrosine (Tyr113). 115–123 (SHGATGKGN) serves as a coordination point for ATP. L-aspartate contacts are provided by Thr119, Asn123, and Asp124. Asn123 lines the L-citrulline pocket. Arg127 serves as a coordination point for L-citrulline. 2 positions are modified to N6-acetyllysine; by CLOCK: Lys165 and Lys176. L-citrulline-binding residues include Ser180 and Ser189. A Phosphoserine modification is found at Ser180. Thr219 is modified (phosphothreonine). Residues Glu270 and Tyr282 each coordinate L-citrulline.

Belongs to the argininosuccinate synthase family. Type 1 subfamily. As to quaternary structure, homotetramer. Interacts with NMRAL1. Interacts with CLOCK; in a circadian manner. Forms tissue-specific complexes with ASL, SLC7A1, HSP90AA1 and nitric oxide synthase NOS1, NOS2 or NOS3; the complex regulates cell-autonomous L-arginine synthesis and citrulline recycling while channeling extracellular L-arginine to nitric oxide synthesis pathway. Acetylated by CLOCK in a circadian manner which negatively regulates its enzyme activity. Deacetylated by histone deacetylases. As to expression, expressed in adult liver.

The protein resides in the cytoplasm. It localises to the cytosol. It carries out the reaction L-citrulline + L-aspartate + ATP = 2-(N(omega)-L-arginino)succinate + AMP + diphosphate + H(+). It functions in the pathway amino-acid biosynthesis; L-arginine biosynthesis; L-arginine from L-ornithine and carbamoyl phosphate: step 2/3. Its pathway is nitrogen metabolism; urea cycle; (N(omega)-L-arginino)succinate from L-aspartate and L-citrulline: step 1/1. In terms of biological role, one of the enzymes of the urea cycle, the metabolic pathway transforming neurotoxic amonia produced by protein catabolism into inocuous urea in the liver of ureotelic animals. Catalyzes the formation of arginosuccinate from aspartate, citrulline and ATP and together with ASL it is responsible for the biosynthesis of arginine in most body tissues. The protein is Argininosuccinate synthase of Homo sapiens (Human).